A 218-amino-acid chain; its full sequence is Glycerol-3-phosphate acyltransferase (218 aa).

The next 5 membrane-spanning stretches (helical) occupy residues 10–30 (LTLG…FGLI), 60–80 (DLAA…VLLA), 88–108 (PAII…PVWL), 125–145 (SAAW…AFLF), and 165–185 (AFDQ…LIFI).

Belongs to the PlsY family. Probably interacts with PlsX.

Its subcellular location is the cell inner membrane. The enzyme catalyses an acyl phosphate + sn-glycerol 3-phosphate = a 1-acyl-sn-glycero-3-phosphate + phosphate. It functions in the pathway lipid metabolism; phospholipid metabolism. Functionally, catalyzes the transfer of an acyl group from acyl-phosphate (acyl-PO(4)) to glycerol-3-phosphate (G3P) to form lysophosphatidic acid (LPA). This enzyme utilizes acyl-phosphate as fatty acyl donor, but not acyl-CoA or acyl-ACP. The polypeptide is Glycerol-3-phosphate acyltransferase (Caulobacter vibrioides (strain ATCC 19089 / CIP 103742 / CB 15) (Caulobacter crescentus)).